The following is a 243-amino-acid chain: Glucosamine-6-phosphate deaminase (243 aa).

The Proton acceptor; for enolization step role is filled by Asp67. Asn137 functions as the For ring-opening step in the catalytic mechanism. The Proton acceptor; for ring-opening step role is filled by His139. Residue Glu144 is the For ring-opening step of the active site.

The protein belongs to the glucosamine/galactosamine-6-phosphate isomerase family. NagB subfamily.

The enzyme catalyses alpha-D-glucosamine 6-phosphate + H2O = beta-D-fructose 6-phosphate + NH4(+). It functions in the pathway amino-sugar metabolism; N-acetylneuraminate degradation; D-fructose 6-phosphate from N-acetylneuraminate: step 5/5. Catalyzes the reversible isomerization-deamination of glucosamine 6-phosphate (GlcN6P) to form fructose 6-phosphate (Fru6P) and ammonium ion. In Staphylococcus epidermidis (strain ATCC 35984 / DSM 28319 / BCRC 17069 / CCUG 31568 / BM 3577 / RP62A), this protein is Glucosamine-6-phosphate deaminase.